The primary structure comprises 899 residues: Alanine--tRNA ligase (899 aa).

Zn(2+) is bound by residues His595, His599, Cys703, and His707.

It belongs to the class-II aminoacyl-tRNA synthetase family. Zn(2+) serves as cofactor.

The protein localises to the cytoplasm. The catalysed reaction is tRNA(Ala) + L-alanine + ATP = L-alanyl-tRNA(Ala) + AMP + diphosphate. Functionally, catalyzes the attachment of alanine to tRNA(Ala) in a two-step reaction: alanine is first activated by ATP to form Ala-AMP and then transferred to the acceptor end of tRNA(Ala). Also edits incorrectly charged Ser-tRNA(Ala) and Gly-tRNA(Ala) via its editing domain. The sequence is that of Alanine--tRNA ligase from Caldivirga maquilingensis (strain ATCC 700844 / DSM 13496 / JCM 10307 / IC-167).